The primary structure comprises 118 residues: Large ribosomal subunit protein bL19 (118 aa).

This sequence belongs to the bacterial ribosomal protein bL19 family.

Functionally, this protein is located at the 30S-50S ribosomal subunit interface and may play a role in the structure and function of the aminoacyl-tRNA binding site. This is Large ribosomal subunit protein bL19 from Campylobacter fetus subsp. fetus (strain 82-40).